The primary structure comprises 284 residues: 4-diphosphocytidyl-2-C-methyl-D-erythritol kinase (284 aa).

Residue K14 is part of the active site. 98 to 108 lines the ATP pocket; it reads PMGGGLGGGSS. D140 is a catalytic residue.

It belongs to the GHMP kinase family. IspE subfamily.

It carries out the reaction 4-CDP-2-C-methyl-D-erythritol + ATP = 4-CDP-2-C-methyl-D-erythritol 2-phosphate + ADP + H(+). It participates in isoprenoid biosynthesis; isopentenyl diphosphate biosynthesis via DXP pathway; isopentenyl diphosphate from 1-deoxy-D-xylulose 5-phosphate: step 3/6. In terms of biological role, catalyzes the phosphorylation of the position 2 hydroxy group of 4-diphosphocytidyl-2C-methyl-D-erythritol. The sequence is that of 4-diphosphocytidyl-2-C-methyl-D-erythritol kinase from Shewanella baltica (strain OS195).